The primary structure comprises 278 residues: Elongation factor Ts (278 aa).

The involved in Mg(2+) ion dislocation from EF-Tu stretch occupies residues 81 to 84; sequence TDFV.

Belongs to the EF-Ts family.

The protein localises to the cytoplasm. In terms of biological role, associates with the EF-Tu.GDP complex and induces the exchange of GDP to GTP. It remains bound to the aminoacyl-tRNA.EF-Tu.GTP complex up to the GTP hydrolysis stage on the ribosome. The protein is Elongation factor Ts of Thermobifida fusca (strain YX).